The primary structure comprises 161 residues: ATP synthase subunit b 1 (161 aa).

A helical transmembrane segment spans residues 5–25 (PETWVAIAFLLLMGVFAYVGV).

The protein belongs to the ATPase B chain family. In terms of assembly, F-type ATPases have 2 components, F(1) - the catalytic core - and F(0) - the membrane proton channel. F(1) has five subunits: alpha(3), beta(3), gamma(1), delta(1), epsilon(1). F(0) has three main subunits: a(1), b(2) and c(10-14). The alpha and beta chains form an alternating ring which encloses part of the gamma chain. F(1) is attached to F(0) by a central stalk formed by the gamma and epsilon chains, while a peripheral stalk is formed by the delta and b chains.

It localises to the cell inner membrane. Functionally, f(1)F(0) ATP synthase produces ATP from ADP in the presence of a proton or sodium gradient. F-type ATPases consist of two structural domains, F(1) containing the extramembraneous catalytic core and F(0) containing the membrane proton channel, linked together by a central stalk and a peripheral stalk. During catalysis, ATP synthesis in the catalytic domain of F(1) is coupled via a rotary mechanism of the central stalk subunits to proton translocation. In terms of biological role, component of the F(0) channel, it forms part of the peripheral stalk, linking F(1) to F(0). The chain is ATP synthase subunit b 1 from Nitrobacter winogradskyi (strain ATCC 25391 / DSM 10237 / CIP 104748 / NCIMB 11846 / Nb-255).